The primary structure comprises 327 residues: GTPase Obg (327 aa).

An Obg domain is found at 1–159 (MQFIDQANII…WEVQLELKLL (159 aa)). Residues 160–327 (AEVGIIGLPN…SLLSEVWKRI (168 aa)) form the OBG-type G domain. ATP-binding positions include 166–173 (GLPNAGKS), 191–195 (FTTLI), 213–216 (DIPG), 280–283 (NKIE), and 309–311 (SSS). Residues serine 173 and threonine 193 each coordinate Mg(2+).

This sequence belongs to the TRAFAC class OBG-HflX-like GTPase superfamily. OBG GTPase family. Monomer. Requires Mg(2+) as cofactor.

The protein localises to the cytoplasm. Functionally, an essential GTPase which binds GTP, GDP and possibly (p)ppGpp with moderate affinity, with high nucleotide exchange rates and a fairly low GTP hydrolysis rate. Plays a role in control of the cell cycle, stress response, ribosome biogenesis and in those bacteria that undergo differentiation, in morphogenesis control. The chain is GTPase Obg from Prochlorococcus marinus (strain AS9601).